We begin with the raw amino-acid sequence, 447 residues long: Phosphoglucosamine mutase (447 aa).

Ser-100 (phosphoserine intermediate) is an active-site residue. Mg(2+) contacts are provided by Ser-100, Asp-239, Asp-241, and Asp-243. Ser-100 carries the post-translational modification Phosphoserine.

Belongs to the phosphohexose mutase family. Mg(2+) serves as cofactor. Activated by phosphorylation.

The catalysed reaction is alpha-D-glucosamine 1-phosphate = D-glucosamine 6-phosphate. Catalyzes the conversion of glucosamine-6-phosphate to glucosamine-1-phosphate. The protein is Phosphoglucosamine mutase of Thermoanaerobacter sp. (strain X514).